The chain runs to 944 residues: Protein unc-45 homolog A (944 aa).

A disordered region spans residues 1–25 (MTVSGPGTPEPRPSDPGASSAEELR). TPR repeat units follow at residues 21-54 (AEEL…GATP), 58-91 (AILH…DGGD), and 92-125 (VKAL…EPKN). At lysine 70 the chain carries N6-acetyllysine. Lysine 483 carries the post-translational modification N6-acetyllysine.

In terms of assembly, interacts with PGR isoforms A and B as well as with NR3C1 in the absence of ligand, and with HSP90AB1. Binding to HSP90AB1 involves 2 UNC45A monomers per HSP90AB1 dimer.

The protein resides in the cytoplasm. Its subcellular location is the perinuclear region. It localises to the nucleus. May act as co-chaperone for HSP90 (Potential). Prevents the stimulation of HSP90AB1 ATPase activity by AHSA1. Positive factor in promoting PGR function in the cell. May be necessary for proper folding of myosin (Potential). Necessary for normal cell proliferation. Necessary for normal myotube formation and myosin accumulation during muscle cell development. May play a role in erythropoiesis in stroma cells in the spleen. This is Protein unc-45 homolog A (Unc45a) from Rattus norvegicus (Rat).